Reading from the N-terminus, the 391-residue chain is 2,4,6-trihydroxybenzophenone synthase (391 aa).

Cys-165 is a catalytic residue.

The protein belongs to the thiolase-like superfamily. Chalcone/stilbene synthases family. Homodimer. Expressed in young fruit pericarp.

It catalyses the reaction benzoyl-CoA + 3 malonyl-CoA + 2 H(+) = 2,4,6-trihydroxybenzophenone + 3 CO2 + 4 CoA. Its function is as follows. Type III polyketide synthase involved in the biosynthesis of benzophenones and xanthones. Produces mainly 2,4,6-trihydroxybenzophenone together with minor amounts of tetraketide lactone, triketide lactone and diketide lactone. The preferred substrate is benzoyl-CoA, but can also use acetyl-CoA, phenylacetyl-CoA, hexanoyl-CoA, cinnamoyl-CoA, p-coumaroyl-CoA and salicoyl-CoA. The sequence is that of 2,4,6-trihydroxybenzophenone synthase (BPS) from Garcinia mangostana (Mangosteen).